The sequence spans 405 residues: uncharacterized protein (405 aa).

10 consecutive transmembrane segments (helical) span residues 9–29, 41–61, 74–94, 98–118, 138–158, 168–190, 227–247, 252–272, 291–311, and 373–393; these read VFAL…VTIV, VFLA…ASFC, VLAG…YSVT, QAFF…GAFF, ANGV…GLGG, LVVG…LHVN, ALAG…AVLH, WWGM…VIAI, LVMS…LCAL, and IAFI…LAQP.

The protein belongs to the major facilitator superfamily. Drug:H(+) antiporter-3 (DHA3) (TC 2.A.1.21) family.

It localises to the cell membrane. This is an uncharacterized protein from Bacillus subtilis (strain 168).